We begin with the raw amino-acid sequence, 440 residues long: tRNA(Ile)-lysidine synthase (440 aa).

31 to 36 (SGGADS) lines the ATP pocket.

Belongs to the tRNA(Ile)-lysidine synthase family.

The protein localises to the cytoplasm. It carries out the reaction cytidine(34) in tRNA(Ile2) + L-lysine + ATP = lysidine(34) in tRNA(Ile2) + AMP + diphosphate + H(+). In terms of biological role, ligates lysine onto the cytidine present at position 34 of the AUA codon-specific tRNA(Ile) that contains the anticodon CAU, in an ATP-dependent manner. Cytidine is converted to lysidine, thus changing the amino acid specificity of the tRNA from methionine to isoleucine. The sequence is that of tRNA(Ile)-lysidine synthase from Borrelia garinii subsp. bavariensis (strain ATCC BAA-2496 / DSM 23469 / PBi) (Borreliella bavariensis).